A 156-amino-acid polypeptide reads, in one-letter code: Protein LlR18A (156 aa).

Residues Asn8 and Asp28 each contribute to the trans-zeatin site. Ca(2+) is bound by residues Pro32 and Ile38. 3 residues coordinate trans-zeatin: Lys54, Asp133, and Lys136.

This sequence belongs to the BetVI family. Expressed constitutively in roots.

The protein localises to the cytoplasm. It is found in the cytosol. Its function is as follows. Class II ribonuclease (RNase). Binds to cytokinins. Interacts with melatonin. The protein is Protein LlR18A (LLR18A) of Lupinus luteus (European yellow lupine).